The primary structure comprises 622 residues: Polypeptide N-acetylgalactosaminyltransferase 18 (622 aa).

At 1-12 (MVCTRKTKTLVS) the chain is on the cytoplasmic side. The chain crosses the membrane as a helical; Signal-anchor for type II membrane protein span at residues 13–35 (TCVILSGMTNIICLLYVGWVTNY). Residues 36 to 622 (IASVYVRGQE…ITNVLRSLVS (587 aa)) lie on the Lumenal side of the membrane. 5 disulfide bridges follow: Cys-144/Cys-392, Cys-383/Cys-462, Cys-497/Cys-513, Cys-545/Cys-558, and Cys-586/Cys-606. An N-linked (GlcNAc...) asparagine glycan is attached at Asn-146. The segment at 153-267 (LPEVSIVFIF…VGWAEPVLTR (115 aa)) is catalytic subdomain A. Asp-194 is a substrate binding site. Residue Asn-195 is glycosylated (N-linked (GlcNAc...) asparagine). Asp-251 and His-253 together coordinate Mn(2+). N-linked (GlcNAc...) asparagine glycosylation occurs at Asn-320. Positions 324–400 (PIRSPALIGC…PCSRIAHIER (77 aa)) are catalytic subdomain B. Position 397 (His-397) interacts with Mn(2+). Arg-400 and Tyr-405 together coordinate substrate. The Ricin B-type lectin domain occupies 484-614 (AYGVLQNSLK…KCSGQHWTIT (131 aa)).

It belongs to the glycosyltransferase 2 family. GalNAc-T subfamily. Requires Mn(2+) as cofactor.

It localises to the golgi apparatus membrane. It carries out the reaction L-seryl-[protein] + UDP-N-acetyl-alpha-D-galactosamine = a 3-O-[N-acetyl-alpha-D-galactosaminyl]-L-seryl-[protein] + UDP + H(+). The catalysed reaction is L-threonyl-[protein] + UDP-N-acetyl-alpha-D-galactosamine = a 3-O-[N-acetyl-alpha-D-galactosaminyl]-L-threonyl-[protein] + UDP + H(+). It functions in the pathway protein modification; protein glycosylation. Its function is as follows. Catalyzes the initial reaction in O-linked oligosaccharide biosynthesis, the transfer of an N-acetyl-D-galactosamine (GalNAc) residue from UDP-GalNAc to a serine or threonine residue on the protein receptor. The polypeptide is Polypeptide N-acetylgalactosaminyltransferase 18 (Galnt18) (Mus musculus (Mouse)).